Consider the following 279-residue polypeptide: Orotidine 5'-phosphate decarboxylase (279 aa).

Substrate contacts are provided by residues Asp-8, Lys-30, 58–67 (DLKIHDIPNT), Thr-117, Arg-177, Gln-186, Gly-206, and Arg-207. The active-site Proton donor is Lys-60.

This sequence belongs to the OMP decarboxylase family. Type 1 subfamily. As to quaternary structure, homodimer.

It carries out the reaction orotidine 5'-phosphate + H(+) = UMP + CO2. It functions in the pathway pyrimidine metabolism; UMP biosynthesis via de novo pathway; UMP from orotate: step 2/2. In terms of biological role, catalyzes the decarboxylation of orotidine 5'-monophosphate (OMP) to uridine 5'-monophosphate (UMP). This chain is Orotidine 5'-phosphate decarboxylase, found in Campylobacter jejuni (strain RM1221).